The chain runs to 705 residues: Ribonuclease R (705 aa).

The RNB domain maps to 240 to 567 (RRDLREQLCF…VHRLLKKALR (328 aa)). Residues 615–696 (GEEFIGIITG…ERARVEFELI (82 aa)) enclose the S1 motif domain.

Belongs to the RNR ribonuclease family. RNase R subfamily.

The protein localises to the cytoplasm. The enzyme catalyses Exonucleolytic cleavage in the 3'- to 5'-direction to yield nucleoside 5'-phosphates.. Its function is as follows. 3'-5' exoribonuclease that releases 5'-nucleoside monophosphates and is involved in maturation of structured RNAs. The polypeptide is Ribonuclease R (Aquifex aeolicus (strain VF5)).